The chain runs to 108 residues: T-cell acute lymphocytic leukemia protein 2 (108 aa).

The bHLH domain occupies 2–54 (TRKIFTNTRERWRQQNVNSAFAKLRKLIPTHPPDKKLSKNETLRLAMRYINFL). The interval 89–108 (DRTLLENYQVPSPGPSHHIP) is disordered.

This chain is T-cell acute lymphocytic leukemia protein 2 (TAL2), found in Homo sapiens (Human).